We begin with the raw amino-acid sequence, 203 residues long: MHKDSNIIEELIFSFAQLPGLGNRSARRIVLYLMQDKEVRIKNLNNQLTSVLNNIMECDYCGNLDVVSICNICRHSERDSSIIAIVESVADLWALERSKVFKGWYHVLGKTLSAVSGNDAINSLKLPKLLNRIREYKVQEIILATNSTIDGQMTAFFVIDYLKDENLKISKLASGIPLGGELDYLDEGTLLAAFKARQSHDLL.

The segment at 58 to 73 adopts a C4-type zinc-finger fold; it reads CDYCGNLDVVSICNIC. A Toprim domain is found at 81 to 177; sequence SIIAIVESVA…KISKLASGIP (97 aa).

Belongs to the RecR family.

Functionally, may play a role in DNA repair. It seems to be involved in an RecBC-independent recombinational process of DNA repair. It may act with RecF and RecO. This is Recombination protein RecR from Orientia tsutsugamushi (strain Boryong) (Rickettsia tsutsugamushi).